The sequence spans 293 residues: PHO85 cyclin PHO80 (293 aa).

Residues Ser234 and Ser267 each carry the phosphoserine; by PHO85 modification. A compositionally biased stretch (polar residues) spans 254–272 (ESGSQTTQLKGSSSPNSHS). Positions 254–293 (ESGSQTTQLKGSSSPNSHSSQKRYSEAKDAHIYNKRSKPD) are disordered. Over residues 276–293 (RYSEAKDAHIYNKRSKPD) the composition is skewed to basic and acidic residues.

Belongs to the cyclin family. PHO80 subfamily. As to quaternary structure, forms a cyclin-CDK complex with PHO85. PHO80-PHO85 forms a stable complex with its inhibitor PHO81 under both high- and low-phosphate conditions, but PHO81 only inhibits the kinase upon phosphate starvation. Interacts with transcription factor PHO4. In terms of processing, phosphorylation of Ser-267 by PHO85 is required to form an active cyclin-kinase complex and for function.

The protein resides in the cytoplasm. Its subcellular location is the nucleus. With respect to regulation, inhibited by the CDK inhibitor (CKI) PHO81 in response to phosphate starvation. Cyclin partner of the cyclin-dependent kinase (CDK) PHO85. Negatively regulates the expression of phosphate-starvation-responsive genes under phosphate-rich conditions. The PHO80-PHO85 cyclin-CDK holoenzyme phosphorylates and inactivates the transcription factor PHO4, by preventing its association with the transcription factor PHO2 and the nuclear import receptor PSE1, and by promoting association with the nuclear export receptor MSN5, excluding PHO4 from the nucleus. PHO80-PHO85 phosphorylates and inactivates protein kinase RIM15 by retaining it in the cytoplasm, antagonizing RIM15-induced entry into stationary phase. PHO80-PHO85 also phosphorylates and inactivates the calcineurin-responsive transcription factor CRZ1, linking PHO85 to calcium signaling. In Saccharomyces cerevisiae (strain ATCC 204508 / S288c) (Baker's yeast), this protein is PHO85 cyclin PHO80 (PHO80).